Reading from the N-terminus, the 638-residue chain is Gamma-aminobutyric acid receptor subunit theta (638 aa).

A signal peptide spans methionine 1–alanine 21. At glutamate 22–tyrosine 267 the chain is on the extracellular side. An N-linked (GlcNAc...) asparagine glycan is attached at asparagine 127. Cysteine 183 and cysteine 197 are joined by a disulfide. A helical transmembrane segment spans residues leucine 268–methionine 288. The Cytoplasmic segment spans residues asparagine 289–arginine 296. A helical transmembrane segment spans residues valine 297–methionine 314. The Extracellular segment spans residues arginine 315–lysine 325. The chain crosses the membrane as a helical span at residues alanine 326–valine 346. Topologically, residues tyrosine 347–serine 617 are cytoplasmic. Positions alanine 491–glycine 515 are disordered. The span at cysteine 492–serine 502 shows a compositional bias: acidic residues. Residues arginine 618–tyrosine 638 traverse the membrane as a helical segment.

This sequence belongs to the ligand-gated ion channel (TC 1.A.9) family. Gamma-aminobutyric acid receptor (TC 1.A.9.5) subfamily. GABRQ sub-subfamily. In terms of assembly, heteropentamer, formed by a combination of alpha (GABRA1-6), beta (GABRB1-3), gamma (GABRG1-3), delta (GABRD), epsilon (GABRE), rho (GABRR1-3), pi (GABRP) and theta (GABRQ) chains, each subunit exhibiting distinct physiological and pharmacological properties. As to expression, expressed in brain, lung, and spleen.

Its subcellular location is the postsynaptic cell membrane. It is found in the cell membrane. The enzyme catalyses chloride(in) = chloride(out). Potentiated by etomidate, propofol, pregnanolone and pentobarbital. Theta subunit of the heteropentameric ligand-gated chloride channel gated by gamma-aminobutyric acid (GABA), a major inhibitory neurotransmitter in the brain. GABA-gated chloride channels, also named GABA(A) receptors (GABAAR), consist of five subunits arranged around a central pore and contain GABA active binding site(s) located at the alpha and beta subunit interfaces. When activated by GABA, GABAARs selectively allow the flow of chloride anions across the cell membrane down their electrochemical gradient. The sequence is that of Gamma-aminobutyric acid receptor subunit theta from Mus musculus (Mouse).